An 854-amino-acid polypeptide reads, in one-letter code: Aryl hydrocarbon receptor (854 aa).

Positions M1 to Y9 are excised as a propeptide. Residues M1–H38 form a disordered region. 2 consecutive short sequence motifs (nuclear localization signal) follow at residues R12 to R15 and K36 to R41. Residues P26–K79 enclose the bHLH domain. The tract at residues R37 to K65 is DNA-binding. Required for maintaining the overall integrity of the AHR:ARNT heterodimer and its transcriptional activity regions lie at residues L49–F81, L116–V124, and F264–I266. Residues L63–L71 carry the Nuclear export signal motif. A PAS 1 domain is found at Q111 to A175. The region spanning L270–K340 is the PAS 2 domain. A PAC domain is found at M346 to E387. The disordered stretch occupies residues L425–P451. Positions P440–P451 are enriched in polar residues.

As to quaternary structure, homodimer. Heterodimer; efficient DNA binding requires dimerization with another bHLH protein. Interacts with ARNT; the heterodimer ARNT:AHR binds to core DNA sequence 5'-TGCGTG-3' within the dioxin response element (DRE) of target gene promoters and activates their transcription. Binds MYBBP1A. Interacts with coactivators including SRC-1, RIP140 and NOCA7, and with the corepressor SMRT. Interacts with NEDD8 and IVNS1ABP. Interacts with BMAL1. Interacts with HSP90AB1. Interacts with TIPARP; leading to mono-ADP-ribosylation of AHR and subsequent inhibition of AHR. Mono-ADP-ribosylated, leading to inhibit transcription activator activity of AHR.

The protein localises to the cytoplasm. It localises to the nucleus. Functionally, ligand-activated transcription factor that enables cells to adapt to changing conditions by sensing compounds from the environment, diet, microbiome and cellular metabolism, and which plays important roles in development, immunity and cancer. Upon ligand binding, translocates into the nucleus, where it heterodimerizes with ARNT and induces transcription by binding to xenobiotic response elements (XRE). Regulates a variety of biological processes, including angiogenesis, hematopoiesis, drug and lipid metabolism, cell motility and immune modulation. Xenobiotics can act as ligands: upon xenobiotic-binding, activates the expression of multiple phase I and II xenobiotic chemical metabolizing enzyme genes (such as the CYP1A1 gene). Mediates biochemical and toxic effects of halogenated aromatic hydrocarbons. Next to xenobiotics, natural ligands derived from plants, microbiota, and endogenous metabolism are potent AHR agonists. Tryptophan (Trp) derivatives constitute an important class of endogenous AHR ligands. Acts as a negative regulator of anti-tumor immunity: indoles and kynurenic acid generated by Trp catabolism act as ligand and activate AHR, thereby promoting AHR-driven cancer cell motility and suppressing adaptive immunity. Regulates the circadian clock by inhibiting the basal and circadian expression of the core circadian component PER1. Inhibits PER1 by repressing the CLOCK-BMAL1 heterodimer mediated transcriptional activation of PER1. The heterodimer ARNT:AHR binds to core DNA sequence 5'-TGCGTG-3' within the dioxin response element (DRE) of target gene promoters and activates their transcription. The chain is Aryl hydrocarbon receptor (Ahr) from Mus spicilegus (Steppe mouse).